Here is a 713-residue protein sequence, read N- to C-terminus: Polyribonucleotide nucleotidyltransferase (713 aa).

Mg(2+) is bound by residues aspartate 491 and aspartate 497. A KH domain is found at 558-617 (PRMITIKINPEKIRDVIGKGGSVIRALTEETGTTIDISDDGVVTIASTSSDGMAEAKKRI). The 69-residue stretch at 627–695 (GQVYEGTVLK…EKGRVRLSAK (69 aa)) folds into the S1 motif domain.

Belongs to the polyribonucleotide nucleotidyltransferase family. Requires Mg(2+) as cofactor.

The protein resides in the cytoplasm. The catalysed reaction is RNA(n+1) + phosphate = RNA(n) + a ribonucleoside 5'-diphosphate. In terms of biological role, involved in mRNA degradation. Catalyzes the phosphorolysis of single-stranded polyribonucleotides processively in the 3'- to 5'-direction. The protein is Polyribonucleotide nucleotidyltransferase of Burkholderia cenocepacia (strain ATCC BAA-245 / DSM 16553 / LMG 16656 / NCTC 13227 / J2315 / CF5610) (Burkholderia cepacia (strain J2315)).